The following is a 1208-amino-acid chain: MRLSKLKLAGFKTFVDPTTVLTPGNLVGVVGPNGCGKSNIIDAVRWVLGETRASALRGESMQDVIFNGSTTRKPVSRASVELVFDNAEGRAAGQWSRYAEISVKRVLDRSGESTYYINNVHVRRKDVIDLFLGTGLGPRAYAIIEQGMISRIIEARPEEIRGFLEEAAGVTKYRERRKETEGRLRDARDNLARLDDIRMELGERIVHLEAQAAVAARYRELDAAHVEKQQLLWLVKRNEARAEQARVAASLNEASSRIEADSARLQELETSVESRRDAHFEASEAVHVAQNDLFAASAEVARLETELQHLGEARRRLEARLAQLELDRGHWSSRRETLAADRARWQELAENAALRAEHAEARHLEIADRLPELDSSRQGADATMAAARRELAQTEQQLRVEETKRASALRALEALQQRRGRLEGERGGIVGPDERVLAEREARLEALQDELEVHQQELAAAQPRLPDAQAALKAALEHERAVQRRLTELRARRDALMQLQARVQSQGKLGDWLERHGLDQLPPLWKQLQVAAGWDEAVQAVLRERLAALTSPDPALALAAARTVLDETPPESLAIALPARSGAPAERANCAQGPLSPQGRVTVATTATESSTAIATDVAPAVLALAGLVEVRDPALRALVDDFLAGAWAVERLEDWLPLRAQLAPSTCLVGPRGQVLTRDALVHHAPDARTHGVIERQREIEGLSAELQAHEDEAHLAHDALVVAESAASALQERINGLRRELQTIQAQVHAEQVEVLKLAQARARAQERREQLARDLEDIVHLESAEREHLTRAELEQARAAELAELQRERLDAATEVLREREHAVREARALEQSAARELQEARFSERECAGKLEDIARNQQLAGEQLERVVAELAARAAELDATDDHRSAEALQEALALRGRREAALAARRDALAEAAAALKQVEELRLRTEHEAAPIRARVAELRLALQAAELAVAQFEERLVEARADEAALAPLLAAEPKESTLQREVARLAREIAELGAVNMAALDELTTASERKGYLDAQTEDLLQAIDTLEDAIRRIDRETREQLQDTYNTVNRQFGALFPQLFGGGRAELVLTGEEILDAGIQIVAQPPGKKNASIHLLSGGEKALTAIALVFSMFQLNPAPFCMLDEVDAPLDDTNTERYANMVKRMSAQTQFIFISHSKITMEFAQQLVGVTMQEQGVSRVVEVDIEEALRLADPAAA.

Residue 32–39 (PNGCGKSN) coordinates ATP. Coiled coils occupy residues 170–205 (VTKY…GERI), 239–504 (EARA…ARVQ), and 694–1054 (VIER…QLQD).

The protein belongs to the SMC family. As to quaternary structure, homodimer.

Its subcellular location is the cytoplasm. Required for chromosome condensation and partitioning. The protein is Chromosome partition protein Smc of Thauera aminoaromatica.